A 90-amino-acid chain; its full sequence is Probable Fe(2+)-trafficking protein (90 aa).

Belongs to the Fe(2+)-trafficking protein family.

In terms of biological role, could be a mediator in iron transactions between iron acquisition and iron-requiring processes, such as synthesis and/or repair of Fe-S clusters in biosynthetic enzymes. This is Probable Fe(2+)-trafficking protein from Pseudomonas entomophila (strain L48).